Here is a 210-residue protein sequence, read N- to C-terminus: ATP-dependent Clp protease proteolytic subunit (210 aa).

The active-site Nucleophile is S113. H138 is an active-site residue.

The protein belongs to the peptidase S14 family. Fourteen ClpP subunits assemble into 2 heptameric rings which stack back to back to give a disk-like structure with a central cavity, resembling the structure of eukaryotic proteasomes.

It localises to the cytoplasm. It catalyses the reaction Hydrolysis of proteins to small peptides in the presence of ATP and magnesium. alpha-casein is the usual test substrate. In the absence of ATP, only oligopeptides shorter than five residues are hydrolyzed (such as succinyl-Leu-Tyr-|-NHMec, and Leu-Tyr-Leu-|-Tyr-Trp, in which cleavage of the -Tyr-|-Leu- and -Tyr-|-Trp bonds also occurs).. Cleaves peptides in various proteins in a process that requires ATP hydrolysis. Has a chymotrypsin-like activity. Plays a major role in the degradation of misfolded proteins. This Marinomonas sp. (strain MWYL1) protein is ATP-dependent Clp protease proteolytic subunit.